The primary structure comprises 498 residues: Beta-amylase 5 (498 aa).

Substrate-binding residues include Asp56, His96, and Asp104. The active-site Proton donor is Glu189. Residues Lys298, His303, and Thr345 each coordinate substrate. The active-site Proton acceptor is the Glu383. Residues Asn384–Ala385 and Arg423 contribute to the substrate site.

Belongs to the glycosyl hydrolase 14 family. As to expression, detected in phloem sieve elements.

The protein resides in the cytoplasm. The enzyme catalyses Hydrolysis of (1-&gt;4)-alpha-D-glucosidic linkages in polysaccharides so as to remove successive maltose units from the non-reducing ends of the chains.. In terms of biological role, beta-amylase activity. Major cytosolic beta-amylase isoform in rosette leaves and inflorescences stems. This chain is Beta-amylase 5 (BAM5), found in Arabidopsis thaliana (Mouse-ear cress).